We begin with the raw amino-acid sequence, 574 residues long: Septation ring formation regulator EzrA (574 aa).

The Extracellular segment spans residues 1-7 (MSSGIIL). A helical membrane pass occupies residues 8–26 (LIVAIVLLVIIAYLVGVII). Topologically, residues 27 to 574 (RKRNDSLITS…YEKTREHIRF (548 aa)) are cytoplasmic. Coiled coils occupy residues 102–141 (NFIR…EEKN), 274–350 (ELVT…ETES), and 459–520 (QLEA…SFEA).

The protein belongs to the EzrA family.

The protein localises to the cell membrane. Negative regulator of FtsZ ring formation; modulates the frequency and position of FtsZ ring formation. Inhibits FtsZ ring formation at polar sites. Interacts either with FtsZ or with one of its binding partners to promote depolymerization. In Streptococcus pyogenes serotype M3 (strain SSI-1), this protein is Septation ring formation regulator EzrA.